The chain runs to 673 residues: UvrABC system protein B (673 aa).

One can recognise a Helicase ATP-binding domain in the interval 26 to 183; that stretch reads EGLEDGLAHQ…RRLAELQYTR (158 aa). 39 to 46 provides a ligand contact to ATP; that stretch reads GVTGSGKT. Positions 92-115 match the Beta-hairpin motif; sequence YYDYYQPEAYVPSSDTFIEKDASV. One can recognise a Helicase C-terminal domain in the interval 431–597; sequence QVDDLLSEIR…GLNKKVVDIL (167 aa). One can recognise a UVR domain in the interval 633–668; that stretch reads QQKIHELEGQMMQHAQNLEFEEAAEIRDQLHQLREL.

It belongs to the UvrB family. As to quaternary structure, forms a heterotetramer with UvrA during the search for lesions. Interacts with UvrC in an incision complex.

Its subcellular location is the cytoplasm. Functionally, the UvrABC repair system catalyzes the recognition and processing of DNA lesions. A damage recognition complex composed of 2 UvrA and 2 UvrB subunits scans DNA for abnormalities. Upon binding of the UvrA(2)B(2) complex to a putative damaged site, the DNA wraps around one UvrB monomer. DNA wrap is dependent on ATP binding by UvrB and probably causes local melting of the DNA helix, facilitating insertion of UvrB beta-hairpin between the DNA strands. Then UvrB probes one DNA strand for the presence of a lesion. If a lesion is found the UvrA subunits dissociate and the UvrB-DNA preincision complex is formed. This complex is subsequently bound by UvrC and the second UvrB is released. If no lesion is found, the DNA wraps around the other UvrB subunit that will check the other stand for damage. The chain is UvrABC system protein B from Citrobacter koseri (strain ATCC BAA-895 / CDC 4225-83 / SGSC4696).